The chain runs to 293 residues: Ribosomal protein L11 methyltransferase (293 aa).

Residues Thr-145, Gly-166, Asp-188, and Asn-230 each coordinate S-adenosyl-L-methionine.

It belongs to the methyltransferase superfamily. PrmA family.

The protein localises to the cytoplasm. It carries out the reaction L-lysyl-[protein] + 3 S-adenosyl-L-methionine = N(6),N(6),N(6)-trimethyl-L-lysyl-[protein] + 3 S-adenosyl-L-homocysteine + 3 H(+). Functionally, methylates ribosomal protein L11. The sequence is that of Ribosomal protein L11 methyltransferase from Enterobacter sp. (strain 638).